The chain runs to 361 residues: Peptide chain release factor 1 (361 aa).

Q236 is subject to N5-methylglutamine. A compositionally biased stretch (basic and acidic residues) spans 285-309; it reads TAKDSARAADRKAQVGSGDRSERIR. The disordered stretch occupies residues 285–311; sequence TAKDSARAADRKAQVGSGDRSERIRTY.

It belongs to the prokaryotic/mitochondrial release factor family. Post-translationally, methylated by PrmC. Methylation increases the termination efficiency of RF1.

It is found in the cytoplasm. Functionally, peptide chain release factor 1 directs the termination of translation in response to the peptide chain termination codons UAG and UAA. The polypeptide is Peptide chain release factor 1 (Methylorubrum extorquens (strain CM4 / NCIMB 13688) (Methylobacterium extorquens)).